The sequence spans 350 residues: MALDENKRKAIDLAIKQIDKAFGKGALVRLGEKPVEKIDSISTGSLGLDIALGIGGIPQGRIIEIYGPESSGKTTLALQVIAECQKKGGICAFIDAEHALDVSYAKRLGVDAENLLVSQPDYGEQALEILETLTRSGAVDLIVVDSVAALTPKSEIDGDMGDQHVGLQARLMSQALRKVTGVLHKMNTTVIFINQIRMKIGMMGYGSPETTTGGNALKFYASVRIDVRRIASLKQGEQHIGNRVKAKVVKNKVAPPFREAEFDIMFGEGISQEGELIDYGVKLDIVDKSGSWLSYGDKKLGQGKENAKAFLKENKEIANEIQAKIIGAIGSSDEITTFGDDEDESENLES.

Residue 67–74 (GPESSGKT) coordinates ATP.

This sequence belongs to the RecA family.

The protein resides in the cytoplasm. Functionally, can catalyze the hydrolysis of ATP in the presence of single-stranded DNA, the ATP-dependent uptake of single-stranded DNA by duplex DNA, and the ATP-dependent hybridization of homologous single-stranded DNAs. It interacts with LexA causing its activation and leading to its autocatalytic cleavage. The polypeptide is Protein RecA (Wolinella succinogenes (strain ATCC 29543 / DSM 1740 / CCUG 13145 / JCM 31913 / LMG 7466 / NCTC 11488 / FDC 602W) (Vibrio succinogenes)).